A 119-amino-acid polypeptide reads, in one-letter code: uncharacterized protein (119 aa).

It localises to the mitochondrion. This is an uncharacterized protein from Arabidopsis thaliana (Mouse-ear cress).